The primary structure comprises 440 residues: MRLSRYFLPILKENPKEAEIVSHRLMLRAGMIRQQSAGIYSWLPLGKRVLDKVNKIIREEQNRAGAIELLMPTLQTAELWQESGRYDDYGKEMLRIKDRQDRQMLYGPTNEEMITDIFRSYVKSYKNLPLNLYHIQLKFRDEVRPRFGTMRSREFLMKDAYSFDLTKEDAIHSYNKMFVAYLRTFERLGLRAIPMRADTGPIGGNHSHEFIILADTGESEVFCHKSFLDRAIPAESTDFDDVAALQGVFDEWTADYAATSEMHDDAAYDAIPEGERLSARGIEVGHIFYFGTKYSEPMGAKVQGKDGKEHPVHMGSYGIGPTRLVPAIIEASHDENGIIWPASVAPFDVVIINMKAGDAACDAACEKLYYQLSNAGKDVLYDDTDDRAGQKFATADLIGVPVQIIVGPRSVANGEVEVKDRKTGERETVTIEAAMNKALG.

Belongs to the class-II aminoacyl-tRNA synthetase family. ProS type 2 subfamily. In terms of assembly, homodimer.

It is found in the cytoplasm. The catalysed reaction is tRNA(Pro) + L-proline + ATP = L-prolyl-tRNA(Pro) + AMP + diphosphate. Its function is as follows. Catalyzes the attachment of proline to tRNA(Pro) in a two-step reaction: proline is first activated by ATP to form Pro-AMP and then transferred to the acceptor end of tRNA(Pro). The chain is Proline--tRNA ligase from Agrobacterium fabrum (strain C58 / ATCC 33970) (Agrobacterium tumefaciens (strain C58)).